Consider the following 302-residue polypeptide: MNSSPARAVRALVQSQSRQRPTLERACLSCATVVHARRCFSVLDRPPPNYPGHVPLTRVERAGLAVGSGLWSLLDPRRGDLIAAFAEATATPYFVPRLRDAMLASPTGRRILRDRPRITSSSLDLPRLRSLPQGTVGATYVAWLDREGVTPDTRAHVRYVDDEECAYVLQRYRESHDFYHALTALPVVREGEVALKAFEFANTLLPMTGLATFAAFTLREGERRRFVDTYLPWAVKNGLRAKEIINVYWEEEMETDVVDLRKALGIEPPPDMRDARKRERDARRRRKQLETEAQQGLDAASL.

A mitochondrion-targeting transit peptide spans 1-19 (MNSSPARAVRALVQSQSRQ). Positions 176, 177, 180, and 192 each coordinate Zn(2+). Residues 268 to 282 (PPPDMRDARKRERDA) show a composition bias toward basic and acidic residues. The segment at 268–302 (PPPDMRDARKRERDARRRRKQLETEAQQGLDAASL) is disordered.

The protein belongs to the COQ4 family. In terms of assembly, component of a multi-subunit COQ enzyme complex, composed of at least COQ3, COQ4, COQ5, COQ6, COQ7 and COQ9. It depends on Zn(2+) as a cofactor.

It is found in the mitochondrion inner membrane. It catalyses the reaction a 4-hydroxy-3-methoxy-5-(all-trans-polyprenyl)benzoate + H(+) = a 2-methoxy-6-(all-trans-polyprenyl)phenol + CO2. The protein operates within cofactor biosynthesis; ubiquinone biosynthesis. Functionally, lyase that catalyzes the C1-decarboxylation of 4-hydroxy-3-methoxy-5-(all-trans-polyprenyl)benzoic acid into 2-methoxy-6-(all-trans-polyprenyl)phenol during ubiquinone biosynthesis. This chain is Ubiquinone biosynthesis protein COQ4, mitochondrial, found in Pyricularia oryzae (strain 70-15 / ATCC MYA-4617 / FGSC 8958) (Rice blast fungus).